Consider the following 212-residue polypeptide: Guanylate kinase (212 aa).

In terms of domain architecture, Guanylate kinase-like spans 7 to 187; sequence GLLIVLSGPS…AADRIIAIIR (181 aa). ATP is bound at residue 14-21; that stretch reads GPSGVGKA.

Belongs to the guanylate kinase family.

The protein localises to the cytoplasm. The catalysed reaction is GMP + ATP = GDP + ADP. Essential for recycling GMP and indirectly, cGMP. The polypeptide is Guanylate kinase (Onion yellows phytoplasma (strain OY-M)).